The sequence spans 744 residues: Phosphoribosylformylglycinamidine synthase subunit PurL (744 aa).

His49 is a catalytic residue. The ATP site is built by Tyr52 and Lys91. Glu93 serves as a coordination point for Mg(2+). Substrate is bound by residues Ser94 to His97 and Arg116. Residue His95 is the Proton acceptor of the active site. Asp117 lines the Mg(2+) pocket. Gln240 provides a ligand contact to substrate. Asp268 contributes to the Mg(2+) binding site. Residue Glu312 to Gln314 coordinates substrate. The ATP site is built by Asp493 and Gly530. Asn531 lines the Mg(2+) pocket. Ser533 is a binding site for substrate.

The protein belongs to the FGAMS family. Monomer. Part of the FGAM synthase complex composed of 1 PurL, 1 PurQ and 2 PurS subunits.

Its subcellular location is the cytoplasm. The catalysed reaction is N(2)-formyl-N(1)-(5-phospho-beta-D-ribosyl)glycinamide + L-glutamine + ATP + H2O = 2-formamido-N(1)-(5-O-phospho-beta-D-ribosyl)acetamidine + L-glutamate + ADP + phosphate + H(+). It functions in the pathway purine metabolism; IMP biosynthesis via de novo pathway; 5-amino-1-(5-phospho-D-ribosyl)imidazole from N(2)-formyl-N(1)-(5-phospho-D-ribosyl)glycinamide: step 1/2. Part of the phosphoribosylformylglycinamidine synthase complex involved in the purines biosynthetic pathway. Catalyzes the ATP-dependent conversion of formylglycinamide ribonucleotide (FGAR) and glutamine to yield formylglycinamidine ribonucleotide (FGAM) and glutamate. The FGAM synthase complex is composed of three subunits. PurQ produces an ammonia molecule by converting glutamine to glutamate. PurL transfers the ammonia molecule to FGAR to form FGAM in an ATP-dependent manner. PurS interacts with PurQ and PurL and is thought to assist in the transfer of the ammonia molecule from PurQ to PurL. This Nitrobacter hamburgensis (strain DSM 10229 / NCIMB 13809 / X14) protein is Phosphoribosylformylglycinamidine synthase subunit PurL.